The primary structure comprises 77 residues: Sec-independent protein translocase protein TatA (77 aa).

The chain crosses the membrane as a helical span at residues 1–21 (MGGLSIWHWLIVLLIVALVFG). Residues 43–77 (MKESEAPADAQQLPRSGSVNVDAKDAARSSDSNKA) form a disordered region. Positions 64–77 (DAKDAARSSDSNKA) are enriched in basic and acidic residues.

This sequence belongs to the TatA/E family. The Tat system comprises two distinct complexes: a TatABC complex, containing multiple copies of TatA, TatB and TatC subunits, and a separate TatA complex, containing only TatA subunits. Substrates initially bind to the TatABC complex, which probably triggers association of the separate TatA complex to form the active translocon.

Its subcellular location is the cell inner membrane. In terms of biological role, part of the twin-arginine translocation (Tat) system that transports large folded proteins containing a characteristic twin-arginine motif in their signal peptide across membranes. TatA could form the protein-conducting channel of the Tat system. The protein is Sec-independent protein translocase protein TatA of Burkholderia mallei (strain NCTC 10247).